The primary structure comprises 96 residues: Large ribosomal subunit protein bL28 (96 aa).

The tract at residues M1 to N23 is disordered.

The protein belongs to the bacterial ribosomal protein bL28 family.

The polypeptide is Large ribosomal subunit protein bL28 (Cereibacter sphaeroides (strain ATCC 17025 / ATH 2.4.3) (Rhodobacter sphaeroides)).